A 184-amino-acid chain; its full sequence is ATP synthase subunit b, chloroplastic (184 aa).

Residues 27-49 traverse the membrane as a helical segment; it reads LATNPINLSVVLGVLIFFGKGVL.

This sequence belongs to the ATPase B chain family. In terms of assembly, F-type ATPases have 2 components, F(1) - the catalytic core - and F(0) - the membrane proton channel. F(1) has five subunits: alpha(3), beta(3), gamma(1), delta(1), epsilon(1). F(0) has four main subunits: a(1), b(1), b'(1) and c(10-14). The alpha and beta chains form an alternating ring which encloses part of the gamma chain. F(1) is attached to F(0) by a central stalk formed by the gamma and epsilon chains, while a peripheral stalk is formed by the delta, b and b' chains.

It localises to the plastid. Its subcellular location is the chloroplast thylakoid membrane. F(1)F(0) ATP synthase produces ATP from ADP in the presence of a proton or sodium gradient. F-type ATPases consist of two structural domains, F(1) containing the extramembraneous catalytic core and F(0) containing the membrane proton channel, linked together by a central stalk and a peripheral stalk. During catalysis, ATP synthesis in the catalytic domain of F(1) is coupled via a rotary mechanism of the central stalk subunits to proton translocation. Functionally, component of the F(0) channel, it forms part of the peripheral stalk, linking F(1) to F(0). The chain is ATP synthase subunit b, chloroplastic from Nicotiana tomentosiformis (Tobacco).